A 340-amino-acid chain; its full sequence is Anthranilate phosphoribosyltransferase (340 aa).

Residues Gly-78, 81-82 (GD), Thr-86, 88-91 (NIST), 106-114 (KHGNRSVSS), and Ser-118 contribute to the 5-phospho-alpha-D-ribose 1-diphosphate site. Residue Gly-78 participates in anthranilate binding. Ser-90 is a Mg(2+) binding site. Asn-109 is a binding site for anthranilate. Arg-164 contributes to the anthranilate binding site. Mg(2+) contacts are provided by Asp-223 and Glu-224.

The protein belongs to the anthranilate phosphoribosyltransferase family. As to quaternary structure, homodimer. It depends on Mg(2+) as a cofactor.

It catalyses the reaction N-(5-phospho-beta-D-ribosyl)anthranilate + diphosphate = 5-phospho-alpha-D-ribose 1-diphosphate + anthranilate. The protein operates within amino-acid biosynthesis; L-tryptophan biosynthesis; L-tryptophan from chorismate: step 2/5. Catalyzes the transfer of the phosphoribosyl group of 5-phosphorylribose-1-pyrophosphate (PRPP) to anthranilate to yield N-(5'-phosphoribosyl)-anthranilate (PRA). The sequence is that of Anthranilate phosphoribosyltransferase from Bacillus pumilus (strain SAFR-032).